Consider the following 339-residue polypeptide: Cytochrome c biogenesis protein CcsA (339 aa).

7 consecutive transmembrane segments (helical) span residues Leu-6–Trp-26, Ile-37–Leu-57, Leu-71–Ile-91, Trp-97–Leu-117, Met-142–Ile-162, Ile-247–Asn-267, and Thr-281–Ile-299.

Belongs to the CcmF/CycK/Ccl1/NrfE/CcsA family. May interact with Ccs1.

The protein resides in the plastid. The protein localises to the chloroplast thylakoid membrane. Functionally, required during biogenesis of c-type cytochromes (cytochrome c6 and cytochrome f) at the step of heme attachment. The polypeptide is Cytochrome c biogenesis protein CcsA (Anthoceros angustus (Hornwort)).